A 329-amino-acid chain; its full sequence is Helicase VP6-A (329 aa).

2 disordered regions span residues 28 to 130 and 189 to 232; these read NLVD…TNGG and DLRR…SEEP. 3 stretches are compositionally biased toward basic and acidic residues: residues 36–58, 65–83, and 96–109; these read EGGK…KDGE, GQKE…DRRI, and SGER…RGDG. ATP is bound at residue lysine 110. Residues 110–129 are compositionally biased toward gly residues; the sequence is KVGGGGGDADAGVGATGTNG. Composition is skewed to basic and acidic residues over residues 189 to 207 and 215 to 232; these read DLRR…ERGG and HGDA…SEEP.

It belongs to the reoviruses VP6 family. As to quaternary structure, homohexamer.

Its subcellular location is the virion. The catalysed reaction is ATP + H2O = ADP + phosphate + H(+). In terms of biological role, ATP dependent RNA helicase essential for RNA packaging and viral transcription. Possesses ss- and dsRNA-binding capacity. This chain is Helicase VP6-A (Segment-9), found in Bluetongue virus 10 (isolate USA) (BTV 10).